A 346-amino-acid chain; its full sequence is Phosphate acyltransferase (346 aa).

It belongs to the PlsX family. Homodimer. Probably interacts with PlsY.

It is found in the cytoplasm. It carries out the reaction a fatty acyl-[ACP] + phosphate = an acyl phosphate + holo-[ACP]. The protein operates within lipid metabolism; phospholipid metabolism. Its function is as follows. Catalyzes the reversible formation of acyl-phosphate (acyl-PO(4)) from acyl-[acyl-carrier-protein] (acyl-ACP). This enzyme utilizes acyl-ACP as fatty acyl donor, but not acyl-CoA. In Brucella suis biovar 1 (strain 1330), this protein is Phosphate acyltransferase.